A 396-amino-acid polypeptide reads, in one-letter code: Small ribosomal subunit protein mS27 (396 aa).

It belongs to the mitochondrion-specific ribosomal protein mS27 family. In terms of assembly, component of the mitochondrial small ribosomal subunit (mt-SSU). Mature N.crassa 74S mitochondrial ribosomes consist of a small (37S) and a large (54S) subunit. The 37S small subunit contains a 16S ribosomal RNA (16S mt-rRNA) and 32 different proteins. The 54S large subunit contains a 23S rRNA (23S mt-rRNA) and 42 different proteins.

It localises to the mitochondrion. Functionally, component of the mitochondrial ribosome (mitoribosome), a dedicated translation machinery responsible for the synthesis of mitochondrial genome-encoded proteins, including at least some of the essential transmembrane subunits of the mitochondrial respiratory chain. The mitoribosomes are attached to the mitochondrial inner membrane and translation products are cotranslationally integrated into the membrane. This Neurospora crassa (strain ATCC 24698 / 74-OR23-1A / CBS 708.71 / DSM 1257 / FGSC 987) protein is Small ribosomal subunit protein mS27 (mrp13).